Reading from the N-terminus, the 274-residue chain is Cytochrome b-c1 complex subunit Rieske, mitochondrial (274 aa).

The Mitochondrial matrix portion of the chain corresponds to S79 to S103. The chain crosses the membrane as a helical span at residues R104–M140. Over S141–G274 the chain is Mitochondrial intermembrane. The Rieske domain maps to E187 to V272. The [2Fe-2S] cluster site is built by C217, H219, C236, H239, and S241. An intrachain disulfide couples C222 to C238.

The protein belongs to the Rieske iron-sulfur protein family. Component of the ubiquinol-cytochrome c oxidoreductase (cytochrome b-c1 complex, complex III, CIII), a multisubunit enzyme composed of 11 subunits. The complex is composed of 3 respiratory subunits cytochrome b, cytochrome c1 and Rieske protein UQCRFS1, 2 core protein subunits UQCRC1/QCR1 and UQCRC2/QCR2, and 6 low-molecular weight protein subunits UQCRH/QCR6, UQCRB/QCR7, UQCRQ/QCR8, UQCR10/QCR9, UQCR11/QCR10 and subunit 9, the cleavage product of Rieske protein UQCRFS1. The complex exists as an obligatory dimer and forms supercomplexes (SCs) in the inner mitochondrial membrane with NADH-ubiquinone oxidoreductase (complex I, CI) and cytochrome c oxidase (complex IV, CIV), resulting in different assemblies (supercomplex SCI(1)III(2)IV(1) and megacomplex MCI(2)III(2)IV(2)). Incorporation of the Rieske protein UQCRFS1 is the penultimate step in complex III assembly. Interacts with TTC19, which is involved in the clearance of UQCRFS1 fragments. As to quaternary structure, component of the ubiquinol-cytochrome c oxidoreductase (cytochrome b-c1 complex, complex III, CIII). Subunit 9 corresponds to the mitochondrial targeting sequence (MTS) of Rieske protein UQCRFS1. It is retained after processing and incorporated inside complex III, where it remains bound to the complex and localizes between the 2 core subunits UQCRC1/QCR1 and UQCRC2/QCR2. The cofactor is [2Fe-2S] cluster. Proteolytic processing is necessary for the correct insertion of UQCRFS1 in the complex III dimer. Several fragments are generated during UQCRFS1 insertion, most probably due to the endogenous matrix-processing peptidase (MPP) activity of the 2 core protein subunits UQCRC1/QCR1 and UQCRC2/QCR2, which are homologous to the 2 mitochondrial-processing peptidase (MPP) subunits beta-MPP and alpha-MPP respectively. The action of the protease is also necessary for the clearance of the UQCRFS1 fragments.

It is found in the mitochondrion inner membrane. It catalyses the reaction a quinol + 2 Fe(III)-[cytochrome c](out) = a quinone + 2 Fe(II)-[cytochrome c](out) + 2 H(+)(out). In terms of biological role, component of the ubiquinol-cytochrome c oxidoreductase, a multisubunit transmembrane complex that is part of the mitochondrial electron transport chain which drives oxidative phosphorylation. The respiratory chain contains 3 multisubunit complexes succinate dehydrogenase (complex II, CII), ubiquinol-cytochrome c oxidoreductase (cytochrome b-c1 complex, complex III, CIII) and cytochrome c oxidase (complex IV, CIV), that cooperate to transfer electrons derived from NADH and succinate to molecular oxygen, creating an electrochemical gradient over the inner membrane that drives transmembrane transport and the ATP synthase. The cytochrome b-c1 complex catalyzes electron transfer from ubiquinol to cytochrome c, linking this redox reaction to translocation of protons across the mitochondrial inner membrane, with protons being carried across the membrane as hydrogens on the quinol. In the process called Q cycle, 2 protons are consumed from the matrix, 4 protons are released into the intermembrane space and 2 electrons are passed to cytochrome c. The Rieske protein is a catalytic core subunit containing a [2Fe-2S] iron-sulfur cluster. It cycles between 2 conformational states during catalysis to transfer electrons from the quinol bound in the Q(0) site in cytochrome b to cytochrome c1. Incorporation of UQCRFS1 is the penultimate step in complex III assembly. Its function is as follows. Component of the ubiquinol-cytochrome c oxidoreductase (cytochrome b-c1 complex, complex III, CIII). UQCRFS1 undergoes proteolytic processing once it is incorporated in the complex III dimer. One of the fragments, called subunit 9, corresponds to its mitochondrial targeting sequence (MTS). The proteolytic processing is necessary for the correct insertion of UQCRFS1 in the complex III dimer, but the persistence of UQCRFS1-derived fragments may prevent newly imported UQCRFS1 to be processed and assembled into complex III and is detrimental for the complex III structure and function. This is Cytochrome b-c1 complex subunit Rieske, mitochondrial (UQCRFS1) from Chlorocebus aethiops (Green monkey).